Reading from the N-terminus, the 489-residue chain is UDP-N-acetylmuramoyl-L-alanyl-D-glutamate--2,6-diaminopimelate ligase (489 aa).

Serine 30 is a binding site for UDP-N-acetyl-alpha-D-muramoyl-L-alanyl-D-glutamate. 113-119 (GTNGKTS) contributes to the ATP binding site. UDP-N-acetyl-alpha-D-muramoyl-L-alanyl-D-glutamate contacts are provided by residues 155 to 156 (TT), serine 182, glutamine 188, and arginine 190. Residue lysine 222 is modified to N6-carboxylysine. Residues arginine 388, 412–415 (DNPR), glycine 463, and glutamate 467 contribute to the meso-2,6-diaminopimelate site. Residues 412–415 (DNPR) carry the Meso-diaminopimelate recognition motif motif.

This sequence belongs to the MurCDEF family. MurE subfamily. Requires Mg(2+) as cofactor. Post-translationally, carboxylation is probably crucial for Mg(2+) binding and, consequently, for the gamma-phosphate positioning of ATP.

It localises to the cytoplasm. The enzyme catalyses UDP-N-acetyl-alpha-D-muramoyl-L-alanyl-D-glutamate + meso-2,6-diaminopimelate + ATP = UDP-N-acetyl-alpha-D-muramoyl-L-alanyl-gamma-D-glutamyl-meso-2,6-diaminopimelate + ADP + phosphate + H(+). The protein operates within cell wall biogenesis; peptidoglycan biosynthesis. In terms of biological role, catalyzes the addition of meso-diaminopimelic acid to the nucleotide precursor UDP-N-acetylmuramoyl-L-alanyl-D-glutamate (UMAG) in the biosynthesis of bacterial cell-wall peptidoglycan. The chain is UDP-N-acetylmuramoyl-L-alanyl-D-glutamate--2,6-diaminopimelate ligase from Coxiella burnetii (strain RSA 493 / Nine Mile phase I).